Reading from the N-terminus, the 421-residue chain is UDP-N-acetylglucosamine 1-carboxyvinyltransferase (421 aa).

Residue 22–23 (KN) coordinates phosphoenolpyruvate. Arginine 92 is a UDP-N-acetyl-alpha-D-glucosamine binding site. The active-site Proton donor is the aspartate 116. Residues 121–125 (RPIDQ), aspartate 307, and isoleucine 330 contribute to the UDP-N-acetyl-alpha-D-glucosamine site.

It belongs to the EPSP synthase family. MurA subfamily.

The protein resides in the cytoplasm. The enzyme catalyses phosphoenolpyruvate + UDP-N-acetyl-alpha-D-glucosamine = UDP-N-acetyl-3-O-(1-carboxyvinyl)-alpha-D-glucosamine + phosphate. It participates in cell wall biogenesis; peptidoglycan biosynthesis. Functionally, cell wall formation. Adds enolpyruvyl to UDP-N-acetylglucosamine. This chain is UDP-N-acetylglucosamine 1-carboxyvinyltransferase, found in Lactobacillus johnsonii (strain CNCM I-12250 / La1 / NCC 533).